The chain runs to 250 residues: Small ribosomal subunit protein uS5 (250 aa).

The segment covering 1–22 (MNVVETSSEMNSNVEKASTPKQ) has biased composition (polar residues). A disordered region spans residues 1–40 (MNVVETSSEMNSNVEKASTPKQENNKRFERKSRPSSRQKV). The 64-residue stretch at 45–108 (FEEKVVTIRR…KEAKKNLVSV (64 aa)) folds into the S5 DRBM domain.

Belongs to the universal ribosomal protein uS5 family. Part of the 30S ribosomal subunit. Contacts proteins S4 and S8.

Its function is as follows. With S4 and S12 plays an important role in translational accuracy. Located at the back of the 30S subunit body where it stabilizes the conformation of the head with respect to the body. The protein is Small ribosomal subunit protein uS5 of Mycoplasma capricolum subsp. capricolum (strain California kid / ATCC 27343 / NCTC 10154).